The primary structure comprises 353 residues: Variable large protein 12 (353 aa).

The N-terminal stretch at 1–18 is a signal peptide; the sequence is MRKRISAIIMTLFMVLAS. A lipid anchor (N-palmitoyl cysteine) is attached at cysteine 19. Cysteine 19 is lipidated: S-diacylglycerol cysteine.

The protein belongs to the variable large protein (Vlp) family. Beta subfamily.

The protein resides in the cell outer membrane. The Vlp and Vsp proteins are antigenically distinct proteins, only one vlp or vsp gene is transcriptionally active at any one time. Switching between these genes is a mechanism of host immune response evasion. The chain is Variable large protein 12 from Borrelia hermsii.